Consider the following 817-residue polypeptide: U3 small nucleolar RNA-associated protein 13 (817 aa).

WD repeat units lie at residues 59–100, 102–139, 142–187, 191–233, 238–280, 386–425, 432–476, 489–528, 531–572, 573–614, 616–654, and 664–705; these read EDEQ…RSMK, SSPS…ITHS, GHGG…HTLQ, SAVR…KCKL, PVNQ…VLKR, GHED…CKFD, GHSA…ASMD, AHEK…LEAT, NHKR…KTLE, GHTN…KTLD, HNNR…EIEE, and EQEQ…LGES.

Interacts with snoRNA U3. Interacts with MPP10. Component of the ribosomal small subunit (SSU) processome composed of at least 40 protein subunits and snoRNA U3.

The protein resides in the nucleus. It localises to the nucleolus. Involved in nucleolar processing of pre-18S ribosomal RNA. This is U3 small nucleolar RNA-associated protein 13 (UTP13) from Saccharomyces cerevisiae (strain ATCC 204508 / S288c) (Baker's yeast).